A 190-amino-acid chain; its full sequence is Imidazoleglycerol-phosphate dehydratase (190 aa).

This sequence belongs to the imidazoleglycerol-phosphate dehydratase family.

It localises to the cytoplasm. The enzyme catalyses D-erythro-1-(imidazol-4-yl)glycerol 3-phosphate = 3-(imidazol-4-yl)-2-oxopropyl phosphate + H2O. Its pathway is amino-acid biosynthesis; L-histidine biosynthesis; L-histidine from 5-phospho-alpha-D-ribose 1-diphosphate: step 6/9. In Wolinella succinogenes (strain ATCC 29543 / DSM 1740 / CCUG 13145 / JCM 31913 / LMG 7466 / NCTC 11488 / FDC 602W) (Vibrio succinogenes), this protein is Imidazoleglycerol-phosphate dehydratase.